We begin with the raw amino-acid sequence, 621 residues long: Putative zinc metalloprotease CPn_0344/CP_0416/CPj0344/CpB0350 (621 aa).

His-20 lines the Zn(2+) pocket. Residue Glu-21 is part of the active site. Zn(2+) is bound at residue His-24. A run of 3 helical transmembrane segments spans residues 103-125 (ILVLVAGPLANILLAVLAFSILY), 561-583 (VLNLLPIPVLDGGYILLCLWEIV), and 596-613 (ILVPFTFLLIIFFIFLTF).

This sequence belongs to the peptidase M50B family. The cofactor is Zn(2+).

The protein resides in the cell inner membrane. The chain is Putative zinc metalloprotease CPn_0344/CP_0416/CPj0344/CpB0350 from Chlamydia pneumoniae (Chlamydophila pneumoniae).